The chain runs to 233 residues: Glycerol-3-phosphate acyltransferase 5 (233 aa).

5 consecutive transmembrane segments (helical) span residues 3 to 23 (LVFIIMAIAGYLVGAIPMAYL), 69 to 89 (MILLSGALGLALWQQIVVGLF), 116 to 136 (LVMAPVPALIALGTAIAFGLF), 143 to 163 (VFLGVAALPFMSGYFHGFFGI), and 168 to 188 (TISWGFIGIFLIMVTRRLMAP).

It belongs to the PlsY family. In terms of assembly, probably interacts with PlsX.

It localises to the cell membrane. It catalyses the reaction an acyl phosphate + sn-glycerol 3-phosphate = a 1-acyl-sn-glycero-3-phosphate + phosphate. It functions in the pathway lipid metabolism; phospholipid metabolism. Catalyzes the transfer of an acyl group from acyl-phosphate (acyl-PO(4)) to glycerol-3-phosphate (G3P) to form lysophosphatidic acid (LPA). This enzyme utilizes acyl-phosphate as fatty acyl donor, but not acyl-CoA or acyl-ACP. The polypeptide is Glycerol-3-phosphate acyltransferase 5 (Dehalococcoides mccartyi (strain ATCC BAA-2266 / KCTC 15142 / 195) (Dehalococcoides ethenogenes (strain 195))).